Reading from the N-terminus, the 347-residue chain is UPF0283 membrane protein ECA1987 (347 aa).

A compositionally biased stretch (basic and acidic residues) spans 1-11 (MNEPLKPRVTF). Residues 1-48 (MNEPLKPRVTFDDVSPQEPQPQLRAGLAFDEQSSTPFSPISREEEVPE) form a disordered region. 3 helical membrane passes run 70–90 (MVMA…VQSL), 99–119 (WIAL…VGSL), and 213–233 (ESTL…FIAW).

Belongs to the UPF0283 family.

It is found in the cell inner membrane. This Pectobacterium atrosepticum (strain SCRI 1043 / ATCC BAA-672) (Erwinia carotovora subsp. atroseptica) protein is UPF0283 membrane protein ECA1987.